A 322-amino-acid polypeptide reads, in one-letter code: NADH oxidoreductase HCR (322 aa).

Residues Gln7 to Asp107 enclose the FAD-binding FR-type domain. Residues Glu111–Glu213 are oxidoreductase. Residues Ser237–Ala322 form the 2Fe-2S ferredoxin-type domain. Residues Cys273, Cys278, Cys281, and Cys311 each contribute to the [2Fe-2S] cluster site.

In the N-terminal section; belongs to the FAD-binding oxidoreductase type 6 family. The cofactor is [2Fe-2S] cluster. Requires FAD as cofactor.

Its function is as follows. NADH oxidoreductase acting in concert with HCP. The sequence is that of NADH oxidoreductase HCR (hcr) from Escherichia coli (strain K12).